The chain runs to 530 residues: Lysine--tRNA ligase (530 aa).

Residues 28-36 (PSGHIHVGN) carry the 'HIGH' region motif. A 'KMSKS' region motif is present at residues 278 to 282 (PMSSS).

It belongs to the class-I aminoacyl-tRNA synthetase family.

The protein localises to the cytoplasm. It catalyses the reaction tRNA(Lys) + L-lysine + ATP = L-lysyl-tRNA(Lys) + AMP + diphosphate. This is Lysine--tRNA ligase (lysS) from Methanocaldococcus jannaschii (strain ATCC 43067 / DSM 2661 / JAL-1 / JCM 10045 / NBRC 100440) (Methanococcus jannaschii).